The chain runs to 475 residues: Aspartyl/glutamyl-tRNA(Asn/Gln) amidotransferase subunit B (475 aa).

It belongs to the GatB/GatE family. GatB subfamily. In terms of assembly, heterotrimer of A, B and C subunits.

The catalysed reaction is L-glutamyl-tRNA(Gln) + L-glutamine + ATP + H2O = L-glutaminyl-tRNA(Gln) + L-glutamate + ADP + phosphate + H(+). It catalyses the reaction L-aspartyl-tRNA(Asn) + L-glutamine + ATP + H2O = L-asparaginyl-tRNA(Asn) + L-glutamate + ADP + phosphate + 2 H(+). In terms of biological role, allows the formation of correctly charged Asn-tRNA(Asn) or Gln-tRNA(Gln) through the transamidation of misacylated Asp-tRNA(Asn) or Glu-tRNA(Gln) in organisms which lack either or both of asparaginyl-tRNA or glutaminyl-tRNA synthetases. The reaction takes place in the presence of glutamine and ATP through an activated phospho-Asp-tRNA(Asn) or phospho-Glu-tRNA(Gln). This chain is Aspartyl/glutamyl-tRNA(Asn/Gln) amidotransferase subunit B, found in Staphylococcus carnosus (strain TM300).